Here is a 294-residue protein sequence, read N- to C-terminus: MLENLSTEHRNEKTMNLDEMSIKEVLQSMNEEDRTVALAVEKEIEQIEKVVQTVIKSFEEEGRLIYIGAGTSGRLGILDAVECPPTFGTDDKMVQGFIAGGLKAFTKAVEGAEDREELAEEDLKSIGLNEKDTVIGIAASGRTPYVIGGLKYAQSVGASTASISCNKNAEISKYAKLNVEVETGAEILTGSTRLKAGTAQKLVLNMISTASMIGVGKVYKNLMVDVQSTNEKLVERSKRIIVEATGASYEVATEYYEKAERNVKAAIVMVLLQCEYGEALEKLKYAKGFVKKAL.

Positions 54-217 (VIKSFEEEGR…STASMIGVGK (164 aa)) constitute an SIS domain. Residue E82 is the Proton donor of the active site. E113 is an active-site residue.

It belongs to the GCKR-like family. MurNAc-6-P etherase subfamily. In terms of assembly, homodimer.

It carries out the reaction N-acetyl-D-muramate 6-phosphate + H2O = N-acetyl-D-glucosamine 6-phosphate + (R)-lactate. Its pathway is amino-sugar metabolism; N-acetylmuramate degradation. Its function is as follows. Specifically catalyzes the cleavage of the D-lactyl ether substituent of MurNAc 6-phosphate, producing GlcNAc 6-phosphate and D-lactate. This Bacillus cereus (strain B4264) protein is N-acetylmuramic acid 6-phosphate etherase.